The following is a 425-amino-acid chain: Glyco-Gag protein (425 aa).

Over 1-54 (MSRASSGTATGARLFGISSVLGEYRVLIGDEGAGPSRSPSEVSFSVWYRSRAAR) the chain is Cytoplasmic. Residues 55–75 (LVIVCLVASFLVPCLTFLIAE) form a helical membrane-spanning segment. Residues 76 to 425 (TVMGQTITTP…VVQGKEETPA (350 aa)) lie on the Extracellular side of the membrane. The N-linked (GlcNAc...) asparagine; by host glycan is linked to asparagine 137. Residues 174-285 (VRPFLPPPKP…LREGPNNRPQ (112 aa)) form a disordered region. Over residues 177–196 (FLPPPKPPTSLPQPLSPQPS) the composition is skewed to pro residues. Positions 197–209 (APLTSSLYPVLPK) are enriched in low complexity. Pro residues-rich tracts occupy residues 213–223 (PKPPVLPPDPS) and 233–248 (EPPP…PSGP).

Glycosylated by host. In terms of processing, cleaved by host near the middle of the molecule, releasing the c-terminal half containing capsid and nucleoprotein domains op GAG.

Its subcellular location is the host cell membrane. Its function is as follows. Plays a role in viral particle release. Presumably acts by facilitating the fission of the virion bud at the cell surface. The protein is Glyco-Gag protein of Felidae (cat family).